The following is a 469-amino-acid chain: Dihydrolipoyl dehydrogenase (469 aa).

FAD is bound by residues 40–48 (EKASLGGVC), Lys-57, and Ala-120. A disulfide bridge connects residues Cys-48 and Cys-53. NAD(+)-binding positions include 186-190 (GGGAI), Glu-209, and 275-278 (AVGV). Residues Asp-317 and Ala-325 each contribute to the FAD site. His-450 (proton acceptor) is an active-site residue.

The protein belongs to the class-I pyridine nucleotide-disulfide oxidoreductase family. As to quaternary structure, homodimer. FAD serves as cofactor.

Its subcellular location is the cytoplasm. The enzyme catalyses N(6)-[(R)-dihydrolipoyl]-L-lysyl-[protein] + NAD(+) = N(6)-[(R)-lipoyl]-L-lysyl-[protein] + NADH + H(+). Lipoamide dehydrogenase is a component of the alpha-ketoacid dehydrogenase complexes. The polypeptide is Dihydrolipoyl dehydrogenase (lpd) (Chlorobaculum parvum (strain DSM 263 / NCIMB 8327) (Chlorobium vibrioforme subsp. thiosulfatophilum)).